The primary structure comprises 219 residues: Large ribosomal subunit protein bL25 (219 aa).

Residues 193–219 form a disordered region; that stretch reads VSSTELEETPEVPASAVPTTDQGESAE. Positions 209 to 219 are enriched in polar residues; sequence VPTTDQGESAE.

Belongs to the bacterial ribosomal protein bL25 family. CTC subfamily. Part of the 50S ribosomal subunit; part of the 5S rRNA/L5/L18/L25 subcomplex. Contacts the 5S rRNA. Binds to the 5S rRNA independently of L5 and L18.

Functionally, this is one of the proteins that binds to the 5S RNA in the ribosome where it forms part of the central protuberance. This is Large ribosomal subunit protein bL25 from Legionella pneumophila (strain Corby).